The sequence spans 179 residues: Ribosome maturation factor RimM (179 aa).

A PRC barrel domain is found at 97 to 170 (DGELSWNFFV…LITVELPEGL (74 aa)).

This sequence belongs to the RimM family. In terms of assembly, binds ribosomal protein uS19.

The protein localises to the cytoplasm. Functionally, an accessory protein needed during the final step in the assembly of 30S ribosomal subunit, possibly for assembly of the head region. Essential for efficient processing of 16S rRNA. May be needed both before and after RbfA during the maturation of 16S rRNA. It has affinity for free ribosomal 30S subunits but not for 70S ribosomes. The chain is Ribosome maturation factor RimM from Bacteroides thetaiotaomicron (strain ATCC 29148 / DSM 2079 / JCM 5827 / CCUG 10774 / NCTC 10582 / VPI-5482 / E50).